Reading from the N-terminus, the 133-residue chain is uncharacterized protein (133 aa).

The chain crosses the membrane as a helical span at residues 91-113 (LFATALISCIPSSFSALSFLATL).

It localises to the membrane. This is an uncharacterized protein from Saccharomyces cerevisiae (strain ATCC 204508 / S288c) (Baker's yeast).